The following is a 169-amino-acid chain: CKLF-like MARVEL transmembrane domain-containing protein 2A (169 aa).

A run of 4 helical transmembrane segments spans residues 40 to 60, 69 to 89, 98 to 118, and 136 to 156; these read FWLSGHAVFKLLSLGCMISAL, HPVLILLICMEAAICIFFIFL, IPFVFWPMADIFNSLFSCVFL, and YLTAMILMGAAAICSFIDMLL. The 123-residue stretch at 40-162 folds into the MARVEL domain; that stretch reads FWLSGHAVFK…DMLLQFQHFR (123 aa).

It belongs to the chemokine-like factor family.

It localises to the membrane. This chain is CKLF-like MARVEL transmembrane domain-containing protein 2A (Cmtm2a), found in Mus musculus (Mouse).